Reading from the N-terminus, the 185-residue chain is Signal peptidase I (185 aa).

Topologically, residues 1–20 are cytoplasmic; it reads MKSEKEKTSKKSAVLDWAKA. A helical membrane pass occupies residues 21–41; sequence IIIAVVLAVLIRNFLFAPYVV. Over 42–185 the chain is Extracellular; it reads DGESMEPTLH…FPFNEIRKTK (144 aa). Residues serine 45 and lysine 85 contribute to the active site.

Belongs to the peptidase S26 family.

The protein localises to the cell membrane. It carries out the reaction Cleavage of hydrophobic, N-terminal signal or leader sequences from secreted and periplasmic proteins.. In Bacillus amyloliquefaciens (Bacillus velezensis), this protein is Signal peptidase I (sipA).